A 150-amino-acid polypeptide reads, in one-letter code: Large ribosomal subunit protein bL9 (150 aa).

It belongs to the bacterial ribosomal protein bL9 family.

Functionally, binds to the 23S rRNA. In Burkholderia thailandensis (strain ATCC 700388 / DSM 13276 / CCUG 48851 / CIP 106301 / E264), this protein is Large ribosomal subunit protein bL9.